Consider the following 465-residue polypeptide: Nucleolar and spindle-associated protein 1 (465 aa).

A coiled-coil region spans residues 32–61 (ADKLLRALKAHLKNEARKENENQDEIQTSA). 3 disordered regions span residues 44 to 123 (KNEA…QNHS), 148 to 207 (VEVP…TPNF), and 252 to 294 (GVPA…GSAK). A compositionally biased stretch (polar residues) spans 56 to 75 (EIQTSASSCDEPEIQTSSQE). Over residues 76-86 (QAEREPDDHVT) the composition is skewed to basic and acidic residues. Over residues 87–96 (KTRGRRKTVH) the composition is skewed to basic residues. Position 152 is a phosphoserine (Ser-152). The span at 154-166 (PNESQGDENTVSS) shows a compositional bias: polar residues. A compositionally biased stretch (basic and acidic residues) spans 169 to 179 (HGIDGNEDPRV). Thr-204 is modified (phosphothreonine). Residues 262–405 (GRLSVACTPG…HKGKLKPWGQ (144 aa)) form an interaction with microtubules region. Residue Ser-265 is modified to Phosphoserine. Thr-269 carries the post-translational modification Phosphothreonine. Phosphoserine is present on residues Ser-272, Ser-292, Ser-299, and Ser-334. A disordered region spans residues 308–338 (SAATKDNEHKRSLTKTPARKSPHVTTSVNTP). 3 positions are modified to phosphothreonine: Thr-337, Thr-361, and Thr-372. Ser-375 and Ser-386 each carry phosphoserine. A disordered region spans residues 396–454 (HKGKLKPWGQSKENNSLHEHVNRVSFHKKTYKQPRLQTREEQRKKHERERKEKKEKVLG). The short motif at 407-413 (KENNSLH) is the KEN box element. Positions 430–457 (RLQTREEQRKKHERERKEKKEKVLGVRR) form a coiled coil. A compositionally biased stretch (basic and acidic residues) spans 432-453 (QTREEQRKKHERERKEKKEKVL).

This sequence belongs to the NUSAP family. In terms of assembly, interacts with DNA and microtubules. Microtubule bundling is inhibited by IPO7, KPNA2 and KPNB1 while association with DNA is also inhibited by IPO7 and KPNA2. Post-translationally, ubiquitinated. Ubiquitination by FZR1 may lead to proteasome-dependent degradation of this protein.

The protein resides in the cytoplasm. It is found in the nucleus. Its subcellular location is the nucleolus. It localises to the cytoskeleton. The protein localises to the spindle. The protein resides in the chromosome. Microtubule-associated protein with the capacity to bundle and stabilize microtubules. May associate with chromosomes and promote the organization of mitotic spindle microtubules around them. The sequence is that of Nucleolar and spindle-associated protein 1 (NUSAP1) from Bos taurus (Bovine).